Here is a 681-residue protein sequence, read N- to C-terminus: T-box-containing protein 2 (681 aa).

The T-box DNA-binding region spans 149 to 323; that stretch reads LWDQFSRAGT…NNPFAKGFRE (175 aa). Disordered regions lie at residues 316-351, 456-489, 521-558, and 589-611; these read PFAKGFREDGARAKKPRNQHNHFSDNDTSPYSEQRR, GITSHSPVQPVPHDNSFTYYNSSSPSSSDSNQSN, PNINIPNTVETNVHSSDSGIGSSPPTPSDDDASNLIPG, and ESGEANANSHTEDFSRNPACQSG. Low complexity predominate over residues 470 to 489; it reads NSFTYYNSSSPSSSDSNQSN. A compositionally biased stretch (polar residues) spans 521 to 534; that stretch reads PNINIPNTVETNVH.

Monomer. In terms of tissue distribution, differentiating muscle and tailbud tip.

The protein localises to the nucleus. Involved in the transcriptional regulation of genes required for muscle differentiation. Binds to a palindromic site (called T site) and activates gene transcription when bound to such a site. This chain is T-box-containing protein 2 (T2), found in Halocynthia roretzi (Sea squirt).